The following is a 177-amino-acid chain: MAEITTIARPYAKAAFDFALEQKAVESWAEMLNFAALVSENETMQPLLSGSVASGKLAELFIGVCGEQINEQAQNLLKVMAENGRLVVLPAVAQQFVEMQREYAKEVEAQIVSATELTSEQLQALSVSLEKRLARKVKLNCSIDTSLIAGVIITAGDLVIDGSVRGKISRLSDSLQS.

This sequence belongs to the ATPase delta chain family. As to quaternary structure, F-type ATPases have 2 components, F(1) - the catalytic core - and F(0) - the membrane proton channel. F(1) has five subunits: alpha(3), beta(3), gamma(1), delta(1), epsilon(1). F(0) has three main subunits: a(1), b(2) and c(10-14). The alpha and beta chains form an alternating ring which encloses part of the gamma chain. F(1) is attached to F(0) by a central stalk formed by the gamma and epsilon chains, while a peripheral stalk is formed by the delta and b chains.

The protein localises to the cell inner membrane. F(1)F(0) ATP synthase produces ATP from ADP in the presence of a proton or sodium gradient. F-type ATPases consist of two structural domains, F(1) containing the extramembraneous catalytic core and F(0) containing the membrane proton channel, linked together by a central stalk and a peripheral stalk. During catalysis, ATP synthesis in the catalytic domain of F(1) is coupled via a rotary mechanism of the central stalk subunits to proton translocation. Its function is as follows. This protein is part of the stalk that links CF(0) to CF(1). It either transmits conformational changes from CF(0) to CF(1) or is implicated in proton conduction. This chain is ATP synthase subunit delta, found in Shewanella pealeana (strain ATCC 700345 / ANG-SQ1).